The chain runs to 177 residues: Probable DNA-directed RNA polymerase subunit delta (177 aa).

The 68-residue stretch at 14 to 81 folds into the HTH HARE-type domain; it reads CSMIEVVHSV…GENRWGLRSW (68 aa). The segment at 91 to 177 is disordered; sequence ILPQPKPKKK…DETEEEEEEL (87 aa). Positions 106-177 are enriched in acidic residues; the sequence is DGFDDYIEED…DETEEEEEEL (72 aa).

Belongs to the RpoE family. In terms of assembly, RNAP is composed of a core of 2 alpha, a beta and a beta' subunits. The core is associated with a delta subunit and one of several sigma factors.

Functionally, participates in both the initiation and recycling phases of transcription. In the presence of the delta subunit, RNAP displays an increased specificity of transcription, a decreased affinity for nucleic acids, and an increased efficiency of RNA synthesis because of enhanced recycling. In Bacillus cereus (strain G9842), this protein is Probable DNA-directed RNA polymerase subunit delta.